The following is a 277-amino-acid chain: Phosphatidylglycerol--prolipoprotein diacylglyceryl transferase (277 aa).

4 helical membrane passes run 18 to 38 (ISVK…LLLA), 51 to 71 (IIVD…RIYY), 89 to 109 (IWHG…TAVI), and 116 to 136 (ISFW…QAIG). Arg137 contacts a 1,2-diacyl-sn-glycero-3-phospho-(1'-sn-glycerol). 3 helical membrane-spanning segments follow: residues 177–197 (QPTF…LLII), 205–225 (GELF…IEGM), and 235–255 (FRVS…LIIY).

The protein belongs to the Lgt family.

It is found in the cell membrane. The enzyme catalyses L-cysteinyl-[prolipoprotein] + a 1,2-diacyl-sn-glycero-3-phospho-(1'-sn-glycerol) = an S-1,2-diacyl-sn-glyceryl-L-cysteinyl-[prolipoprotein] + sn-glycerol 1-phosphate + H(+). Its pathway is protein modification; lipoprotein biosynthesis (diacylglyceryl transfer). Functionally, catalyzes the transfer of the diacylglyceryl group from phosphatidylglycerol to the sulfhydryl group of the N-terminal cysteine of a prolipoprotein, the first step in the formation of mature lipoproteins. The chain is Phosphatidylglycerol--prolipoprotein diacylglyceryl transferase from Listeria innocua serovar 6a (strain ATCC BAA-680 / CLIP 11262).